A 159-amino-acid chain; its full sequence is 2-C-methyl-D-erythritol 2,4-cyclodiphosphate synthase (159 aa).

The a divalent metal cation site is built by Asp-10 and His-12. 4-CDP-2-C-methyl-D-erythritol 2-phosphate-binding positions include 10 to 12 and 37 to 38; these read DVH and HS. His-45 is an a divalent metal cation binding site. 4-CDP-2-C-methyl-D-erythritol 2-phosphate-binding positions include 59 to 61, 64 to 68, 103 to 109, 135 to 138, Phe-142, and Arg-145; these read DIG, FLDTD, AQAPKML, and TTTE.

The protein belongs to the IspF family. In terms of assembly, homotrimer. A divalent metal cation serves as cofactor.

It catalyses the reaction 4-CDP-2-C-methyl-D-erythritol 2-phosphate = 2-C-methyl-D-erythritol 2,4-cyclic diphosphate + CMP. The protein operates within isoprenoid biosynthesis; isopentenyl diphosphate biosynthesis via DXP pathway; isopentenyl diphosphate from 1-deoxy-D-xylulose 5-phosphate: step 4/6. Involved in the biosynthesis of isopentenyl diphosphate (IPP) and dimethylallyl diphosphate (DMAPP), two major building blocks of isoprenoid compounds. Catalyzes the conversion of 4-diphosphocytidyl-2-C-methyl-D-erythritol 2-phosphate (CDP-ME2P) to 2-C-methyl-D-erythritol 2,4-cyclodiphosphate (ME-CPP) with a corresponding release of cytidine 5-monophosphate (CMP). The sequence is that of 2-C-methyl-D-erythritol 2,4-cyclodiphosphate synthase from Francisella tularensis subsp. holarctica (strain FTNF002-00 / FTA).